The chain runs to 488 residues: Ribulose bisphosphate carboxylase large chain (488 aa).

Substrate-binding residues include Asn128 and Thr178. Residue Lys180 is the Proton acceptor of the active site. Position 182 (Lys182) interacts with substrate. Mg(2+) contacts are provided by Lys206, Asp208, and Glu209. N6-carboxylysine is present on Lys206. The active-site Proton acceptor is the His298. 3 residues coordinate substrate: Arg299, His331, and Ser383.

The protein belongs to the RuBisCO large chain family. Type I subfamily. As to quaternary structure, heterohexadecamer of 8 large chains and 8 small chains. Mg(2+) is required as a cofactor.

It catalyses the reaction 2 (2R)-3-phosphoglycerate + 2 H(+) = D-ribulose 1,5-bisphosphate + CO2 + H2O. It carries out the reaction D-ribulose 1,5-bisphosphate + O2 = 2-phosphoglycolate + (2R)-3-phosphoglycerate + 2 H(+). In terms of biological role, ruBisCO catalyzes two reactions: the carboxylation of D-ribulose 1,5-bisphosphate, the primary event in carbon dioxide fixation, as well as the oxidative fragmentation of the pentose substrate. Both reactions occur simultaneously and in competition at the same active site. This chain is Ribulose bisphosphate carboxylase large chain, found in Xanthobacter flavus.